The chain runs to 166 residues: Thiol peroxidase (166 aa).

A Thioredoxin domain is found at 18–166 (LKVGDKAPDV…NYEALLKVLK (149 aa)). Residue cysteine 60 is the Cysteine sulfenic acid (-SOH) intermediate of the active site. The cysteines at positions 60 and 94 are disulfide-linked.

It belongs to the peroxiredoxin family. Tpx subfamily. As to quaternary structure, homodimer.

The catalysed reaction is a hydroperoxide + [thioredoxin]-dithiol = an alcohol + [thioredoxin]-disulfide + H2O. Functionally, thiol-specific peroxidase that catalyzes the reduction of hydrogen peroxide and organic hydroperoxides to water and alcohols, respectively. Plays a role in cell protection against oxidative stress by detoxifying peroxides. This Helicobacter pylori (strain ATCC 700392 / 26695) (Campylobacter pylori) protein is Thiol peroxidase.